Here is a 473-residue protein sequence, read N- to C-terminus: Cell division protein FtsP (473 aa).

Residues 1 to 27 (MSFSRRQFIQVSGLAMCIGAAPLLVRA) constitute a signal peptide (tat-type signal).

It belongs to the FtsP family. Predicted to be exported by the Tat system. The position of the signal peptide cleavage has not been experimentally proven.

The protein resides in the periplasm. Cell division protein that is required for growth during stress conditions. May be involved in protecting or stabilizing the divisomal assembly under conditions of stress. This chain is Cell division protein FtsP, found in Photorhabdus laumondii subsp. laumondii (strain DSM 15139 / CIP 105565 / TT01) (Photorhabdus luminescens subsp. laumondii).